The primary structure comprises 235 residues: Purine nucleoside phosphorylase DeoD-type (235 aa).

Histidine 4 contacts a purine D-ribonucleoside. Phosphate-binding positions include glycine 20, arginine 24, arginine 43, and 87–90 (RVGT). Residues 179 to 181 (EME) and 203 to 204 (SD) contribute to the a purine D-ribonucleoside site. The Proton donor role is filled by aspartate 204.

The protein belongs to the PNP/UDP phosphorylase family. In terms of assembly, homohexamer; trimer of homodimers.

The enzyme catalyses a purine D-ribonucleoside + phosphate = a purine nucleobase + alpha-D-ribose 1-phosphate. The catalysed reaction is a purine 2'-deoxy-D-ribonucleoside + phosphate = a purine nucleobase + 2-deoxy-alpha-D-ribose 1-phosphate. In terms of biological role, catalyzes the reversible phosphorolytic breakdown of the N-glycosidic bond in the beta-(deoxy)ribonucleoside molecules, with the formation of the corresponding free purine bases and pentose-1-phosphate. This is Purine nucleoside phosphorylase DeoD-type from Clostridium perfringens (strain SM101 / Type A).